An 868-amino-acid polypeptide reads, in one-letter code: V-set and immunoglobulin domain-containing protein 10-like (868 aa).

The signal sequence occupies residues 1–27; sequence MGLSWALLPFLLLAFRAELLALQPALG. The segment covering 26–52 has biased composition (low complexity); it reads LGSQPPSASSSHSMGSSRDFVSNVSSS. The segment at 26–82 is disordered; sequence LGSQPPSASSSHSMGSSRDFVSNVSSSQHPQPPGSEASAGIPDSNRFPQGLNSSHVP. Over 28 to 763 the chain is Extracellular; the sequence is SQPPSASSSH…QAGSDLSPGA (736 aa). N-linked (GlcNAc...) asparagine glycosylation is found at N48, N77, and N88. The segment covering 71–80 has biased composition (polar residues); it reads RFPQGLNSSH. Disordered regions lie at residues 96–154 and 323–342; these read LSPD…SGSK and WSRDGRALGTSDPEGAEPPR. Composition is skewed to polar residues over residues 99–108 and 133–143; these read DVTSSETPPS and PASQISVQTPD. 2 Ig-like C2-type domains span residues 289–381 and 389–474; these read PQLS…ADVS and PVIR…SVFN. C311 and C365 are oxidised to a cystine. An N-linked (GlcNAc...) asparagine glycan is attached at N410. The cysteines at positions 415 and 458 are disulfide-linked. N-linked (GlcNAc...) asparagine glycans are attached at residues N474, N628, and N637. The chain crosses the membrane as a helical span at residues 764 to 784; it reads IAGIVLGSLLGLALLAGLLIL. Residues 785-868 lie on the Cytoplasmic side of the membrane; the sequence is CICCLRRYPG…PWTVRAATQV (84 aa).

Its subcellular location is the membrane. The protein is V-set and immunoglobulin domain-containing protein 10-like (Vsig10l) of Mus musculus (Mouse).